Here is a 435-residue protein sequence, read N- to C-terminus: Protein SUPPRESSOR OF K(+) TRANSPORT GROWTH DEFECT 1 (435 aa).

Residues 7-72 enclose the MIT domain; it reads EQAIEYVKQA…LRRAEEIRAV (66 aa). Residues 73-113 are disordered; it reads LDEGGSGPGSNGDAAVATRPKTKPKDGEGGGKDGEDPEQSK. The span at 95–113 shows a compositional bias: basic and acidic residues; that stretch reads KPKDGEGGGKDGEDPEQSK. ATP is bound at residue 172–179; the sequence is GPPGTGKS.

It belongs to the AAA ATPase family. Monomer or homodimer (in nucleotide-free form). Decamer, dodecamer or tetradecamer of two stacked respective homooligomeric rings (when bound to ATP); the dodecameric form seems to be predominant. Interacts with members of the ESCRT-III subcomplex such as LIP5, VPS60-1, VPS2.1, VPS20.1, VPS20.2, VPS24-1, VPS32.1, VPS32.2, CHMP1A and VPS24. Binds to PROS/At4g24370. Mostly expressed in leaves, to a lower extent in seeds, and barely in roots and flowers (at protein level). Particularly expressed in trichomes.

It is found in the cytoplasm. Its subcellular location is the nucleus. The protein resides in the endosome. It localises to the multivesicular body membrane. The protein localises to the prevacuolar compartment membrane. The enzyme catalyses ATP + H2O = ADP + phosphate + H(+). With respect to regulation, activated by LIP5 and PROS. Its function is as follows. Involved in the transport of biosynthetic membrane proteins from the prevacuolar/endosomal compartment to the vacuole. Required for multivesicular body (MVB) protein sorting. Catalyzes the ATP-dependent dissociation of class E VPS proteins from endosomal membranes, such as the disassembly of the ESCRT-III complex. May also regulate cell cycle. Required during seed development for the formation of mucilage in seed coat and testa. Involved in the maintenance of Na(+)/K(+) homeostasis under salt stress. Required for cell expansion. The sequence is that of Protein SUPPRESSOR OF K(+) TRANSPORT GROWTH DEFECT 1 from Arabidopsis thaliana (Mouse-ear cress).